Here is a 418-residue protein sequence, read N- to C-terminus: Voltage-gated ClC-type chloride channel ClcB (418 aa).

Topologically, residues 1 to 4 (MFRR) are cytoplasmic. Residues 5–25 (LLIATVVGILAVFAVAGFRHA) form a helical membrane-spanning segment. Residues 26–53 (MLLLEWLFLNNDSGSLVNAATNLSSWRR) lie on the Periplasmic side of the membrane. Residues 54 to 74 (LLTPALGGLAAGLLLMGWQKF) traverse the membrane as a helical segment. The Cytoplasmic segment spans residues 75-145 (TQQRPHAPTD…QRFTPRQEWK (71 aa)). The helical transmembrane segment at 146 to 166 (LWIACGAAAGMAAAYRAPLAG) threads the bilayer. At 167–172 (SLFIAE) the chain is on the periplasmic side. The chain crosses the membrane as a helical span at residues 173-193 (VLFGTMMLASLGPVIISAIVA). Topologically, residues 194–221 (WLVSNLINHSDALLYNVQLSVTVQARDY) are cytoplasmic. Residues 222-242 (ALIISTGVLAGLCGPLLLTLM) traverse the membrane as a helical segment. Over 243 to 257 (NACHRGFVSLKLAPP) the chain is Periplasmic. The chain crosses the membrane as a helical span at residues 258–278 (WQLALGGLIVGLLSLFTPAVW). Residues 279–290 (GNGYSTVQSFLT) are Cytoplasmic-facing. The helical transmembrane segment at 291-311 (APPLLMIIAGIFLCKLCAVLA) threads the bilayer. Over 312 to 315 (SSGS) the chain is Periplasmic. A helical membrane pass occupies residues 316 to 336 (GAPGGVFTPTLFIGLAIGMLY). Topologically, residues 337–351 (GRSLGLWFPDGEEIT) are cytoplasmic. A helical transmembrane segment spans residues 352 to 372 (LLLGLTGMATLLAATTHAPIM). Residues 373–379 (STLMICE) are Periplasmic-facing. Residues 380-400 (MTGEYQLLPGLLIACVIASVI) traverse the membrane as a helical segment. At 401 to 418 (SRTLHRDSIYRQHTAQHS) the chain is on the cytoplasmic side.

Belongs to the chloride channel (TC 2.A.49) family. ClcB subfamily.

The protein resides in the cell inner membrane. Its function is as follows. Probably acts as an electrical shunt for an outwardly-directed proton pump that is linked to amino acid decarboxylation, as part of the extreme acid resistance (XAR) response. In Shigella flexneri, this protein is Voltage-gated ClC-type chloride channel ClcB (clcB).